The primary structure comprises 305 residues: Taste receptor type 2 member 13 (305 aa).

The Extracellular portion of the chain corresponds to 1 to 7; the sequence is MGSNVYG. Residues 8 to 28 form a helical membrane-spanning segment; it reads ILTMVMIAEFVFGNMSNGFIV. The Cytoplasmic segment spans residues 29–43; it reads LINCIDWVRKGTLSS. The helical transmembrane segment at 44–64 threads the bilayer; sequence IGWILLFLAISRMVLIWEMLI. The Extracellular segment spans residues 65–88; sequence TWIKYMKYSFSFVTGTELRGIMFT. Residues 89–109 traverse the membrane as a helical segment; that stretch reads WVISNHFSLWLATILSIFYLL. The Cytoplasmic portion of the chain corresponds to 110–128; the sequence is KIASFSKPVFLYLKWREKK. The helical transmembrane segment at 129–149 threads the bilayer; the sequence is VLLIVLLGNLIFLMLNILQIN. The Extracellular portion of the chain corresponds to 150–182; sequence KHIEHWMYQYERNITWSSRVSDFAGFSNLVLLE. Asn-162 carries N-linked (GlcNAc...) asparagine glycosylation. Residues 183–203 form a helical membrane-spanning segment; that stretch reads MIVFSVTPFTVALVSFILLIF. Over 204-232 the chain is Cytoplasmic; that stretch reads SLWKHLQKMHLNSRGERDPSTKAHVNALR. A helical membrane pass occupies residues 233 to 253; it reads IMVSFLLLYATYFISFFLSLI. At 254 to 262 the chain is on the extracellular side; it reads PMAHKTRLG. The chain crosses the membrane as a helical span at residues 263-283; that stretch reads LMFSITVGLFYPSSHSFILIL. Topologically, residues 284–305 are cytoplasmic; that stretch reads GHSNLRQASLWVMTYLKCGQKH.

The protein belongs to the G-protein coupled receptor T2R family.

The protein resides in the cell membrane. Receptor that may play a role in the perception of bitterness and is gustducin-linked. May play a role in sensing the chemical composition of the gastrointestinal content. The activity of this receptor may stimulate alpha gustducin, mediate PLC-beta-2 activation and lead to the gating of TRPM5. The protein is Taste receptor type 2 member 13 of Mus musculus (Mouse).